Reading from the N-terminus, the 125-residue chain is Glycine cleavage system H protein (125 aa).

A Lipoyl-binding domain is found at serine 22–threonine 104. At lysine 63 the chain carries N6-lipoyllysine.

This sequence belongs to the GcvH family. In terms of assembly, the glycine cleavage system is composed of four proteins: P, T, L and H. Requires (R)-lipoate as cofactor.

The glycine cleavage system catalyzes the degradation of glycine. The H protein shuttles the methylamine group of glycine from the P protein to the T protein. Its function is as follows. Is also involved in protein lipoylation via its role as an octanoyl/lipoyl carrier protein intermediate. The sequence is that of Glycine cleavage system H protein from Listeria innocua serovar 6a (strain ATCC BAA-680 / CLIP 11262).